We begin with the raw amino-acid sequence, 418 residues long: UDP-N-acetylglucosamine 1-carboxyvinyltransferase (418 aa).

Position 23-24 (23-24 (KN)) interacts with phosphoenolpyruvate. A UDP-N-acetyl-alpha-D-glucosamine-binding site is contributed by R93. D117 functions as the Proton donor in the catalytic mechanism. Residues D305 and V327 each coordinate UDP-N-acetyl-alpha-D-glucosamine.

The protein belongs to the EPSP synthase family. MurA subfamily.

It is found in the cytoplasm. The catalysed reaction is phosphoenolpyruvate + UDP-N-acetyl-alpha-D-glucosamine = UDP-N-acetyl-3-O-(1-carboxyvinyl)-alpha-D-glucosamine + phosphate. The protein operates within cell wall biogenesis; peptidoglycan biosynthesis. Cell wall formation. Adds enolpyruvyl to UDP-N-acetylglucosamine. This is UDP-N-acetylglucosamine 1-carboxyvinyltransferase from Mycobacterium bovis (strain ATCC BAA-935 / AF2122/97).